Here is a 115-residue protein sequence, read N- to C-terminus: Large ribosomal subunit protein bL20 (115 aa).

Belongs to the bacterial ribosomal protein bL20 family.

In terms of biological role, binds directly to 23S ribosomal RNA and is necessary for the in vitro assembly process of the 50S ribosomal subunit. It is not involved in the protein synthesizing functions of that subunit. In Methylococcus capsulatus (strain ATCC 33009 / NCIMB 11132 / Bath), this protein is Large ribosomal subunit protein bL20.